A 152-amino-acid chain; its full sequence is Snaclec 5 (152 aa).

The N-terminal stretch at 1 to 23 (MGRFIFLSSGLLVVFLSLSGTGA) is a signal peptide. Intrachain disulfides connect C27–C38, C55–C148, and C123–C140. The 116-residue stretch at 34 to 149 (YGQHCYRAFK…CASHNPFVCK (116 aa)) folds into the C-type lectin domain.

It belongs to the snaclec family. Heterodimer; disulfide-linked. Expressed by the venom gland.

It localises to the secreted. Functionally, interferes with one step of hemostasis (modulation of platelet aggregation, or coagulation cascade, for example). This chain is Snaclec 5, found in Bitis arietans (African puff adder).